The primary structure comprises 317 residues: MEAETECKVPGVYSETGIPVEDPAPGLNSDVSKKDAPPAVAAPGPGLYFEIGKKARDLLYKDFHTDQKFTLTTYTNNGVVITAASTMKDEAIFSEIQTKLKSNNVMLDVKATSDSQVLTTITTEDLGVSGLKQIVSLPFPYQTAGKAELQYLHDYAGISLGVGLTSKPLVNLSGVFGNKSVAVGADVAVDTSTGDFTKYDAGLTINNSDLAADLTLNNKGDSLTASYYHLVNKESGTAAGAELTHSFSTKENTLSFGMQHALDPLTTVKARYNNHGMVSALIQHEWRPKSFLTLSAEVDTKAIDKASKVGLSLVLKP.

The interval M1–D30 is disordered.

This sequence belongs to the eukaryotic mitochondrial porin (TC 1.B.8.1) family.

The protein localises to the mitochondrion outer membrane. Functionally, forms a channel through the mitochondrial outer membrane that allows diffusion of small hydrophilic molecules. The channel adopts an open conformation at low or zero membrane potential and a closed conformation at potentials above 30-40 mV. The open state has a weak anion selectivity whereas the closed state is cation-selective. The protein is Mitochondrial outer membrane protein porin 4 (VDAC4) of Oryza sativa subsp. japonica (Rice).